Reading from the N-terminus, the 1869-residue chain is Chitin synthase 6 (1869 aa).

The interval 1–23 (MAMNLPPLAGSGGAHTQPSLPAL) is disordered. The 778-residue stretch at 1–778 (MAMNLPPLAG…EIAHLSEASL (778 aa)) folds into the Myosin motor domain. Residue 104-111 (GESGSGKS) participates in ATP binding. N-linked (GlcNAc...) asparagine glycosylation is found at N123, N417, N426, and N557. 2 disordered regions span residues 593 to 612 (KPMRTPSVMSRKTARTARNQ) and 620 to 640 (AEEELEKLSENNSQAGGAAKA). Low complexity predominate over residues 629 to 640 (ENNSQAGGAAKA). N630 and N657 each carry an N-linked (GlcNAc...) asparagine glycan. Positions 655-679 (LDNVTKAVADPSTNSYFVFCLKPND) are actin-binding. 2 consecutive transmembrane segments (helical) span residues 886-906 (WLFMVYLLTWFIPDFLIRFIG) and 925-945 (LIIWLSCLLAAFFIVVFPMLI). In terms of domain architecture, Cytochrome b5 heme-binding spans 949–1010 (QHVYSAAELS…YAGKDATSLF (62 aa)). N-linked (GlcNAc...) asparagine glycosylation is found at N1037, N1062, and N1165. A helical membrane pass occupies residues 1201-1221 (LVLAISIMLVTIIAFKFFAAL). N-linked (GlcNAc...) asparagine glycans are attached at residues N1458 and N1564. 3 consecutive transmembrane segments (helical) span residues 1596 to 1616 (LSTVLQPVTMAYIVYLIVMVI), 1622 to 1642 (VPVTAFILIAAVFGLQAIIFI), and 1649 to 1669 (MIGWMVLYILAIPVFSFGLPL). N1778 carries an N-linked (GlcNAc...) asparagine glycan. The region spanning 1811–1866 (LPSDDALLAEIREILRTADLMTVTKKGIKQELERRFGVPLDAKRAYINSATEALLS) is the DEK-C domain.

The protein in the N-terminal section; belongs to the TRAFAC class myosin-kinesin ATPase superfamily. Myosin family. This sequence in the C-terminal section; belongs to the chitin synthase family. Class V subfamily.

The protein resides in the cell membrane. The enzyme catalyses [(1-&gt;4)-N-acetyl-beta-D-glucosaminyl](n) + UDP-N-acetyl-alpha-D-glucosamine = [(1-&gt;4)-N-acetyl-beta-D-glucosaminyl](n+1) + UDP + H(+). Polymerizes chitin, a structural polymer of the cell wall and septum, by transferring the sugar moiety of UDP-GlcNAc to the non-reducing end of the growing chitin polymer. Plays a role in cell wall integrity and is involved in tolerance to hyperosmotic conditions. Required to successfully penetrate the host plants and thus plays a key role in pathogenicity. The chain is Chitin synthase 6 from Verticillium dahliae (strain VdLs.17 / ATCC MYA-4575 / FGSC 10137) (Verticillium wilt).